The primary structure comprises 656 residues: Ankyrin repeat and SAM domain-containing protein 3 (656 aa).

The interaction with NEK7 stretch occupies residues 1-422 (MSELSDEASE…AESSPQTQRA (422 aa)). Ser2 and Ser5 each carry phosphoserine. ANK repeat units lie at residues 34–64 (DVPL…DLNK), 68–97 (GGWT…SVNV), 101–130 (EGQT…ELEM), 134–163 (QGWT…NANV), 168–197 (CGFT…KVDA), and 201–220 (SGAT…IVAL). 3-hydroxyasparagine is present on Asn96. Phosphoserine is present on residues Ser201, Ser225, Ser243, Ser244, and Ser245. Disordered regions lie at residues 235–265 (SPEK…GVSI) and 277–312 (GIGL…EEEG). The residue at position 319 (Thr319) is a Phosphothreonine. Phosphoserine is present on residues Ser320, Ser368, Ser371, and Ser375. The segment at 346–425 (GPVQSSSSSE…SPQTQRAPYS (80 aa)) is disordered. One can recognise an SAM domain in the interval 425–488 (SGPQDLAALL…TSAIARWHSS (64 aa)). A coiled-coil region spans residues 501-526 (ADRLEAEMQELAIQLHKRCEEVEATR). The residue at position 541 (Ser541) is a Phosphoserine.

As to quaternary structure, homooligomer. Interacts (via SAM domain) with ANKS6 (via SAM domain). Interacts with BICC1. Interacts with NPHP1. Interacts with NEK8. Interacts with HIF1AN. Interacts with NEK7; this interaction alters the subcellular distribution of NEK7 by preventing its nuclear translocation. Post-translationally, hydroxylated at Asn-96, most probably by HIF1AN. Phosphorylations at Ser-5, Ser-225, Thr-319, Ser-320, Ser-368 and Ser-371 occur in a NEK7-dependent manner. In terms of processing, polyubiquitinated.

The protein resides in the cell projection. It is found in the cilium. Its subcellular location is the cytoplasm. May be involved in vasopressin signaling in the kidney. The sequence is that of Ankyrin repeat and SAM domain-containing protein 3 (ANKS3) from Homo sapiens (Human).